We begin with the raw amino-acid sequence, 118 residues long: Small ribosomal subunit protein bS6 (118 aa).

The protein belongs to the bacterial ribosomal protein bS6 family.

Binds together with bS18 to 16S ribosomal RNA. This Saccharopolyspora erythraea (strain ATCC 11635 / DSM 40517 / JCM 4748 / NBRC 13426 / NCIMB 8594 / NRRL 2338) protein is Small ribosomal subunit protein bS6.